The primary structure comprises 364 residues: V-type proton ATPase subunit d (364 aa).

This sequence belongs to the V-ATPase V0D/AC39 subunit family. As to quaternary structure, V-ATPase is a heteromultimeric enzyme composed of a peripheral catalytic V1 complex (components A to H) attached to an integral membrane V0 proton pore complex (components: a, c, c', c'', d, e, f and VOA1).

Its subcellular location is the vacuole membrane. Functionally, subunit of the V0 complex of vacuolar(H+)-ATPase (V-ATPase), a multisubunit enzyme composed of a peripheral complex (V1) that hydrolyzes ATP and a membrane integral complex (V0) that translocates protons. V-ATPase is responsible for acidifying and maintaining the pH of intracellular compartments. This subunit is a non-integral membrane component of the membrane pore domain and is required for proper assembly of the V0 sector. Might be involved in the regulated assembly of V1 subunits onto the membrane sector or alternatively may prevent the passage of protons through V0 pores. This is V-type proton ATPase subunit d from Neurospora crassa (strain ATCC 24698 / 74-OR23-1A / CBS 708.71 / DSM 1257 / FGSC 987).